Consider the following 509-residue polypeptide: Maturase K (509 aa).

The protein belongs to the intron maturase 2 family. MatK subfamily.

Its subcellular location is the plastid. It localises to the chloroplast. Its function is as follows. Usually encoded in the trnK tRNA gene intron. Probably assists in splicing its own and other chloroplast group II introns. This is Maturase K from Cicer arietinum (Chickpea).